The chain runs to 396 residues: tRNA (guanine(9)-N1)-methyltransferase (396 aa).

2 stretches are compositionally biased toward basic and acidic residues: residues 1–18 (MEDDDRPRKYPKLNHDEV) and 52–73 (DRIDNDVKQACDEEGQDAHGKD). Positions 1–109 (MEDDDRPRKY…KVKRKEKLVA (109 aa)) are disordered. One can recognise an SAM-dependent MTase TRM10-type domain in the interval 139–357 (TQKKFQRSTL…QVIPQRKGGK (219 aa)). Residues 264–265 (LS), Gly-284, 288–292 (DKNRH), Cys-296, Leu-310, and 322–324 (QVL) each bind S-adenosyl-L-methionine. Asp-288 serves as the catalytic Proton acceptor. Residues 354–396 (KGGKLKSADHESEDQTPRESVEAVEAEPDGEGAAAEAGEGGKE) are disordered. Over residues 359-374 (KSADHESEDQTPRESV) the composition is skewed to basic and acidic residues.

Belongs to the class IV-like SAM-binding methyltransferase superfamily. TRM10 family. As to quaternary structure, monomer.

The protein resides in the cytoplasm. It localises to the nucleus. It carries out the reaction guanosine(9) in tRNA + S-adenosyl-L-methionine = N(1)-methylguanosine(9) in tRNA + S-adenosyl-L-homocysteine + H(+). In terms of biological role, S-adenosyl-L-methionine-dependent guanine N(1)-methyltransferase that catalyzes the formation of N(1)-methylguanine at position 9 (m1G9) in cytoplasmic tRNA. The polypeptide is tRNA (guanine(9)-N1)-methyltransferase (Aspergillus fumigatus (strain ATCC MYA-4609 / CBS 101355 / FGSC A1100 / Af293) (Neosartorya fumigata)).